The chain runs to 506 residues: Zinc finger and SCAN domain containing protein 4C (506 aa).

Residues 1–24 (MASQQAPAKDLQTNNLEFTPTDSS) form a disordered region. One can recognise an SCAN box domain in the interval 37–119 (SAQLNFSPSN…RFMESLTDEC (83 aa)). 4 C2H2-type zinc fingers span residues 395 to 417 (YKCE…QRTH), 424 to 446 (LLCV…EIIH), 452 to 474 (FKCS…EMIH), and 480 to 503 (YVCS…RNYH).

In terms of tissue distribution, embryonic stem (ES) cell-specific. Expressed in only 5% of ES cells at a given time, but nearly all ES cells express it at least once during 9 passages.

It localises to the nucleus. It is found in the chromosome. Its subcellular location is the telomere. Its function is as follows. Embryonic stem (ES) cell-specific transcription factor required to regulate ES cell pluripotency. Binds telomeres and plays a key role in genomic stability in ES cells by regulating telomere elongation. Acts as an activator of spontaneous telomere sister chromatid exchange (T-SCE) and telomere elongation in undifferentiated ES cells. This Mus musculus (Mouse) protein is Zinc finger and SCAN domain containing protein 4C (Zscan4c).